We begin with the raw amino-acid sequence, 82 residues long: Small ribosomal subunit protein uS17 (82 aa).

It belongs to the universal ribosomal protein uS17 family. As to quaternary structure, part of the 30S ribosomal subunit.

Functionally, one of the primary rRNA binding proteins, it binds specifically to the 5'-end of 16S ribosomal RNA. The chain is Small ribosomal subunit protein uS17 from Rickettsia typhi (strain ATCC VR-144 / Wilmington).